We begin with the raw amino-acid sequence, 142 residues long: C-type lectin 13 (142 aa).

The N-terminal stretch at 1-23 (MGRLVFVSFGGWDVFLSLSGTGA) is a signal peptide. Cystine bridges form between C25–C36, C53–C138, and C115–C130. The C-type lectin domain occupies 32–139 (YEGHCYRVFQ…CSKTHNVVCK (108 aa)).

Belongs to the snaclec family. In terms of assembly, heteromultimer; disulfide-linked. In terms of tissue distribution, expressed by the venom gland.

The protein resides in the secreted. In terms of biological role, interferes with one step of hemostasis (modulation of platelet aggregation, or coagulation cascade, for example). This chain is C-type lectin 13, found in Crotalus adamanteus (Eastern diamondback rattlesnake).